The sequence spans 629 residues: Embryonic polyadenylate-binding protein B (629 aa).

RRM domains lie at 11–89 (ASLY…WSQR), 99–175 (GNVF…HFKS), 191–268 (TNVY…RAQK), and 294–370 (VNLY…LAQR). The 78-residue stretch at 539–616 (QEPLTASLLA…AVAVLQAHQA (78 aa)) folds into the PABC domain.

The protein belongs to the polyadenylate-binding protein type-1 family. Interacts with dazl in an RNA-independent manner. The C-terminus can self-associate and also interact with the C-terminus of pabpc1, independently of RNA. RRM 1 and RRM 2 interact with both eif4g1 and paip1, and the C-terminus also interacts with paip1. Prior to oocyte maturation, found in a complex with dazl and pum2 proteins and spdy1 mRNA; pum2 dissociates from the complex during maturation. Interacts with the translation termination factor sup35/erf3.

The protein localises to the cytoplasm. Its function is as follows. Binds and protects the poly(A) tail of mRNA with or without an AU-rich element (ARE) and prevents mRNA deadenylation. Stimulates the translation of mRNAs to which it is bound during early development. In Xenopus laevis (African clawed frog), this protein is Embryonic polyadenylate-binding protein B (epabp-b).